The primary structure comprises 138 residues: ATP synthase epsilon chain (138 aa).

Belongs to the ATPase epsilon chain family. F-type ATPases have 2 components, CF(1) - the catalytic core - and CF(0) - the membrane proton channel. CF(1) has five subunits: alpha(3), beta(3), gamma(1), delta(1), epsilon(1). CF(0) has three main subunits: a, b and c.

Its subcellular location is the cell inner membrane. In terms of biological role, produces ATP from ADP in the presence of a proton gradient across the membrane. This chain is ATP synthase epsilon chain, found in Geobacter sulfurreducens (strain ATCC 51573 / DSM 12127 / PCA).